We begin with the raw amino-acid sequence, 148 residues long: Lysozyme C-3 (148 aa).

The N-terminal stretch at 1-18 is a signal peptide; it reads MKTLLVLALLLLSVSVQA. One can recognise a C-type lysozyme domain in the interval 19 to 148; that stretch reads KVYDRCEFAR…VSQYIRGCKL (130 aa). Intrachain disulfides connect cysteine 24–cysteine 146, cysteine 48–cysteine 134, cysteine 83–cysteine 99, and cysteine 95–cysteine 113. Active-site residues include glutamate 53 and aspartate 71.

It belongs to the glycosyl hydrolase 22 family. In terms of assembly, monomer.

The protein resides in the secreted. It catalyses the reaction Hydrolysis of (1-&gt;4)-beta-linkages between N-acetylmuramic acid and N-acetyl-D-glucosamine residues in a peptidoglycan and between N-acetyl-D-glucosamine residues in chitodextrins.. Its function is as follows. Lysozymes have primarily a bacteriolytic function; those in tissues and body fluids are associated with the monocyte-macrophage system and enhance the activity of immunoagents. This chain is Lysozyme C-3, found in Sus scrofa (Pig).